Here is a 399-residue protein sequence, read N- to C-terminus: Beta sliding clamp (399 aa).

Belongs to the beta sliding clamp family. Forms a ring-shaped head-to-tail homodimer around DNA which binds and tethers DNA polymerases and other proteins to the DNA. The DNA replisome complex has a single clamp-loading complex (3 tau and 1 each of delta, delta', psi and chi subunits) which binds 3 Pol III cores (1 core on the leading strand and 2 on the lagging strand) each with a beta sliding clamp dimer. Additional proteins in the replisome are other copies of gamma, psi and chi, Ssb, DNA helicase and RNA primase.

Its subcellular location is the cytoplasm. Its function is as follows. Confers DNA tethering and processivity to DNA polymerases and other proteins. Acts as a clamp, forming a ring around DNA (a reaction catalyzed by the clamp-loading complex) which diffuses in an ATP-independent manner freely and bidirectionally along dsDNA. Initially characterized for its ability to contact the catalytic subunit of DNA polymerase III (Pol III), a complex, multichain enzyme responsible for most of the replicative synthesis in bacteria; Pol III exhibits 3'-5' exonuclease proofreading activity. The beta chain is required for initiation of replication as well as for processivity of DNA replication. This chain is Beta sliding clamp (dnaN), found in Mycolicibacterium paratuberculosis (strain ATCC BAA-968 / K-10) (Mycobacterium paratuberculosis).